The following is a 366-amino-acid chain: Latent membrane protein 1 (366 aa).

Topologically, residues 1–23 (MERDLERGPPGPPRPPLGPPLSS) are cytoplasmic. A helical transmembrane segment spans residues 24–44 (SIGLALLLLLLALLFWLYIVL). Residues 45 to 51 (SNWTGGA) lie on the Extracellular side of the membrane. A helical transmembrane segment spans residues 52 to 72 (LLVLYSFALMLIIIILIIFIF). Residues 73-75 (RRD) are Cytoplasmic-facing. Residues 76–96 (LLCPLGGLGLLLLMVTLLLIA) form a helical membrane-spanning segment. Over 97 to 106 (LWNLHGQALY) the chain is Extracellular. The chain crosses the membrane as a helical span at residues 107–127 (LGIVLFIFGCLLVLGLWIYFL). Topologically, residues 128-139 (EILWRLGATIWQ) are cytoplasmic. Residues 140–160 (LLAFILAFFLAIILLIIALYL) form a helical membrane-spanning segment. At 161-163 (QQN) the chain is on the extracellular side. A helical membrane pass occupies residues 164–184 (WWTLLVDLLWLLLFMAILIWM). The Cytoplasmic portion of the chain corresponds to 185 to 366 (YFHGPRHTDE…HGPVQLSYYD (182 aa)). The tract at residues 194-232 (EHHHDDSLPHPQQATDDSSHESDSNSNEGRHHLLVSGAG) is CTAR1. The disordered stretch occupies residues 194-366 (EHHHDDSLPH…HGPVQLSYYD (173 aa)). The Interaction with host TRAF proteins signature appears at 204–208 (PQQAT). The segment covering 210–224 (DSSHESDSNSNEGRH) has biased composition (basic and acidic residues). Low complexity-rich tracts occupy residues 251–267 (NGPQ…PQDP) and 337–346 (PHLPTLLLGT). A CTAR2 region spans residues 332 to 366 (GGGGDPHLPTLLLGTSGSGGDDDDPHGPVQLSYYD).

The protein belongs to the herpesviridae LMP-1 family. In terms of assembly, interacts (via PXQXT motif) with host tumor necrosis factor receptor-associated factor (TRAF) proteins TRAF1, TRAF2, TRAF3 and TRAF5. Interacts with human protein ZMYND11; leading to negatively regulate NF-kappa-B activation. Interacts with host UBE2I; this interaction induces the sumoylation of various cellular proteins. Interacts with host IRF7. In terms of processing, ubiquitinated on the N-terminus.

Its subcellular location is the host cell membrane. In terms of biological role, acts as a CD40 functional homolog to prevent apoptosis of infected B-lymphocytes and drive their proliferation. Functions as a constitutively active tumor necrosis factor receptor that induces the activation of several signaling pathways, including those of the NF-kappa-B family. LMP1 signaling leads to up-regulation of antiapoptotic proteins and provide growth signals in latently infected cells. Interacts with host UBE2I and subsequently affects the sumoylation state of several cellular proteins. For example, induces the sumoylation of host IRF7 thereby limiting its transcriptional activity and modulating the activation of innate immune responses. Also inhibits host IFN-alpha-stimulated STAT2 nuclear translocation and interferon-stimulated response element transcriptional activity by interacting with and inhibiting host TYK2. Induces SUMO expression during viral latency thereby dysregulating the host sumoylation processes. This is Latent membrane protein 1 (LMP1) from Homo sapiens (Human).